Consider the following 538-residue polypeptide: Tetracenomycin C resistance and export protein (538 aa).

A run of 14 helical transmembrane segments spans residues 28–48 (LLAVAVGVMMVALDSTIVAIA), 65–85 (WITNGYLLALAVSLITAGKLG), 100–120 (GFAVTSAAIGLSGSVAAIVVF), 126–146 (LFGALMQPSALGLLRVTFPPG), 154–174 (IWSGVVGASTAAGPIIGGLLV), 181–201 (AVFFINVPVGLAALVAGLVIL), 213–233 (FDVSGIVLLSGAMFCLVWGLI), 239–259 (GWGDLRTLGFLAAAVLAFAGF), 286–306 (VLMVLMAFSFIGGLFFVTFYL), 319–339 (VHLLPLTGMMIVGAPVSGIVI), 342–362 (FGPGGPLVVGMLLTAASLWGM), 371–391 (MGITSLWFVLLGLGLAPVMVG), 413–433 (QSAMQVGGSLGTAVLGVLMAS), and 494–514 (MGLAFTVAGAVALVAAAVALF).

It belongs to the major facilitator superfamily. EmrB family.

The protein resides in the cell membrane. It participates in antibiotic biosynthesis; tetracenomycin C biosynthesis. Functionally, resistance to tetracenomycin C by an active tetracenomycin C efflux system which is probably energized by transmembrane electrochemical gradients. This is Tetracenomycin C resistance and export protein (tcmA) from Streptomyces glaucescens.